Consider the following 192-residue polypeptide: UPF0301 protein Jann_3896 (192 aa).

This sequence belongs to the UPF0301 (AlgH) family.

This Jannaschia sp. (strain CCS1) protein is UPF0301 protein Jann_3896.